The chain runs to 368 residues: MSAPEKPRERSFPKIEFTDSEAGAKVFPSSKSRSFSYFTPAKLRATMYEDVTVDVQPDPDRHLTQGWIYGFGNGPGGYPKDWTTAKSSNWHAFLDPNEEWNQTIYRNNAAVVRQVELCLKNAKRARVYDGWHTIWLTFIERHVGAWMHAENGLALHVFTSIQRSGPTNMINTAVAVNAAHKMRFAQDLALFNLDLAEATDAFDGSVHRAVWQEAPEWQPTRRVVEELTAVGDWCQLLFATNIVFEQLVGSLFRSELIMQIAARNGDYITPTIVGTGEHDYDRDLNYSRNLFRLLTRDPEHGEANKALFAEWLGIWVPRCLDAARALQPIWSTPADKAVTFASSLKAAKAKFSALLEEIDLDIPEELDK.

This sequence belongs to the TmoE/XamoE family. The propane 2-monooxygenase multicomponent enzyme system is composed of an electron transfer component and a monooxygenase component interacting with the effector protein MimD. The electron transfer component is composed of a reductase (MimB), and the monooxygenase component is formed by a large subunit (MimA) and a small subunit (MimC). Requires the presence of the chaperonin-like protein MimG to ensure a productive folding, resulting of a soluble MimC, which leads to the active form of MimABCD.

It carries out the reaction propane + NADH + O2 + H(+) = propan-2-ol + NAD(+) + H2O. It catalyses the reaction acetone + NADH + O2 + H(+) = hydroxyacetone + NAD(+) + H2O. The enzyme catalyses butan-2-one + NADH + O2 + H(+) = 1-hydroxy-2-butanone + NAD(+) + H2O. The catalysed reaction is phenol + NADH + O2 + H(+) = hydroquinone + NAD(+) + H2O. Its function is as follows. Component of the propane 2-monooxygenase multicomponent enzyme system which is involved in the degradation of propane via the O2-dependent hydroxylation of propane. Also involved in the degradation of acetone via the O2-dependent hydroxylation of acetone. Also able to catalyze the oxidation of phenol, methylethylketone (2-butanone), 1-propanol and 2-propanol. In Mycolicibacterium goodii (Mycobacterium goodii), this protein is Propane 2-monooxygenase, hydroxylase component small subunit.